A 207-amino-acid polypeptide reads, in one-letter code: Ras-related protein Rab-7a (207 aa).

Thr-2 carries the post-translational modification N-acetylthreonine. Residues Ser-17, Gly-18, Val-19, Gly-20, Lys-21, Thr-22, Ser-23, Ser-34, Asn-35, Tyr-37, and Thr-40 each coordinate GTP. Thr-22 is a Mg(2+) binding site. Positions 28–41 (YVNKKFSNQYKATI) match the Switch 1 motif. Mg(2+) contacts are provided by Thr-40 and Asp-63. Gly-66 provides a ligand contact to GTP. The Switch 2 signature appears at 67 to 82 (QERFQSLGVAFYRGAD). Ser-72 carries the phosphoserine modification. Positions 125, 126, 128, 156, and 157 each coordinate GTP. Residues Lys-191 and Lys-194 each participate in a glycyl lysine isopeptide (Lys-Gly) (interchain with G-Cter in ubiquitin) cross-link. S-geranylgeranyl cysteine attachment occurs at residues Cys-205 and Cys-207. Cysteine methyl ester is present on Cys-207.

It belongs to the small GTPase superfamily. Rab family. As to quaternary structure, interacts with NTRK1/TRKA. Interacts with RILP. Interacts with PSMA7. Interacts with RNF115. Interacts with FYCO1. Interacts with the PIK3C3/VPS34-PIK3R4 complex. The GTP-bound form interacts with OSBPL1A. The GTP-bound form interacts with RAC1. Interacts with CLN3. Interacts with CHM, the substrate-binding subunit of the Rab geranylgeranyltransferase complex. Interacts with C9orf72. Does not interact with HPS4 and the BLOC-3 complex (heterodimer of HPS1 and HPS4). Interacts with CLN5. Interacts with PLEKHM1 (via N- and C-terminus). Interacts with PRPH; the interaction is direct. Interacts with VPS13A. The GDP-bound form interacts with RIMOC1. Interacts with the MON1A-CCZ1B complex and this interaction is enhanced in the presence of RIMOC1. Interacts with VPS39 and VPS41. Forms a ternary complex with LAMP2 and RUFY4; the interaction with LAMP2 is mediated by RUFY4 (via RUN and coiled coil domains). Mg(2+) is required as a cofactor. In terms of processing, deubiquitination at Lys-191 and Lys-194 by USP32. Post-translationally, phosphorylated at Ser-72 by LRRK1; phosphorylation is dependent on protein kinase C (PKC) activation of LRRK1. Prenylated. Prenylation is required for association with cellular membranes.

Its subcellular location is the cytoplasmic vesicle. The protein localises to the phagosome membrane. It is found in the late endosome membrane. The protein resides in the lysosome membrane. It localises to the melanosome membrane. Its subcellular location is the autophagosome membrane. The protein localises to the lipid droplet. It is found in the endosome membrane. The protein resides in the mitochondrion membrane. It catalyses the reaction GTP + H2O = GDP + phosphate + H(+). Its activity is regulated as follows. Regulated by guanine nucleotide exchange factors (GEFs) which promote the exchange of bound GDP for free GTP. Regulated by GTPase activating proteins (GAPs) which increase the GTP hydrolysis activity. Inhibited by GDP dissociation inhibitors (GDIs). Its function is as follows. The small GTPases Rab are key regulators of intracellular membrane trafficking, from the formation of transport vesicles to their fusion with membranes. Rabs cycle between an inactive GDP-bound form and an active GTP-bound form that is able to recruit to membranes different sets of downstream effectors directly responsible for vesicle formation, movement, tethering and fusion. In its active state, RAB7A binds to a variety of effector proteins playing a key role in the regulation of endo-lysosomal trafficking. Governs early-to-late endosomal maturation, microtubule minus-end as well as plus-end directed endosomal migration and positioning, and endosome-lysosome transport through different protein-protein interaction cascades. Also plays a central role in growth-factor-mediated cell signaling, nutrient-transporter-mediated nutrient uptake, neurotrophin transport in the axons of neurons and lipid metabolism. Also involved in regulation of some specialized endosomal membrane trafficking, such as maturation of melanosomes, pathogen-induced phagosomes (or vacuoles) and autophagosomes. Plays a role in the maturation and acidification of phagosomes that engulf pathogens, such as S.aureus and Mycobacteria. Plays a role in the fusion of phagosomes with lysosomes. In concert with RAC1, plays a role in regulating the formation of RBs (ruffled borders) in osteoclasts. Controls the endosomal trafficking and neurite outgrowth signaling of NTRK1/TRKA. Regulates the endocytic trafficking of the EGF-EGFR complex by regulating its lysosomal degradation. Involved in the ADRB2-stimulated lipolysis through lipophagy, a cytosolic lipase-independent autophagic pathway. Required for the exosomal release of SDCBP, CD63 and syndecan. Required for vesicular trafficking and cell surface expression of ACE2. May play a role in PRPH neuronal intermediate filament assembly. In Pongo abelii (Sumatran orangutan), this protein is Ras-related protein Rab-7a (RAB7A).